We begin with the raw amino-acid sequence, 680 residues long: NADPH--cytochrome P450 reductase (680 aa).

The Lumenal portion of the chain corresponds to 1 to 5 (MALDK). The helical transmembrane segment at 6 to 23 (LDLYVIIVLAVAVAAYFA) threads the bilayer. Over 24–680 (KNQFLDQPQD…VQNRYQEDVW (657 aa)) the chain is Cytoplasmic. In terms of domain architecture, Flavodoxin-like spans 60–204 (TLLLFGSQTG…DFLTWKDNVF (145 aa)). FMN contacts are provided by residues 66 to 71 (SQTGTA), 117 to 120 (ATYG), 152 to 161 (LGNSTYEFYN), and Asp187. The FAD-binding FR-type domain maps to 264–509 (THPYLAKISK…SGPRNKFNKF (246 aa)). Arg283 contributes to the NADP(+) binding site. FAD-binding positions include 439–442 (RYYS), 457–459 (TAV), and 473–476 (GVVT). Residues Thr537, 599–600 (SR), 606–610 (KVYVQ), and Asp642 contribute to the NADP(+) site. Trp680 lines the FAD pocket.

Belongs to the NADPH--cytochrome P450 reductase family. It in the N-terminal section; belongs to the flavodoxin family. This sequence in the C-terminal section; belongs to the flavoprotein pyridine nucleotide cytochrome reductase family. FAD is required as a cofactor. It depends on FMN as a cofactor.

The protein localises to the endoplasmic reticulum membrane. It is found in the mitochondrion outer membrane. The protein resides in the cell membrane. The catalysed reaction is 2 oxidized [cytochrome P450] + NADPH = 2 reduced [cytochrome P450] + NADP(+) + H(+). Functionally, this enzyme is required for electron transfer from NADP to cytochrome P450 in microsomes. It can also provide electron transfer to heme oxygenase and cytochrome B5. Involved in ergosterol biosynthesis. The chain is NADPH--cytochrome P450 reductase from Candida maltosa (Yeast).